A 411-amino-acid chain; its full sequence is Imidazolonepropionase (411 aa).

Fe(3+) contacts are provided by histidine 78 and histidine 80. Histidine 78 and histidine 80 together coordinate Zn(2+). Residues arginine 87, tyrosine 150, and histidine 183 each coordinate 4-imidazolone-5-propanoate. Tyrosine 150 contacts N-formimidoyl-L-glutamate. Histidine 248 serves as a coordination point for Fe(3+). Residue histidine 248 participates in Zn(2+) binding. Glutamine 251 contacts 4-imidazolone-5-propanoate. Aspartate 322 provides a ligand contact to Fe(3+). Aspartate 322 contributes to the Zn(2+) binding site. Residues asparagine 324 and glycine 326 each coordinate N-formimidoyl-L-glutamate. 4-imidazolone-5-propanoate is bound at residue serine 327.

The protein belongs to the metallo-dependent hydrolases superfamily. HutI family. Zn(2+) serves as cofactor. The cofactor is Fe(3+).

Its subcellular location is the cytoplasm. It carries out the reaction 4-imidazolone-5-propanoate + H2O = N-formimidoyl-L-glutamate. Its pathway is amino-acid degradation; L-histidine degradation into L-glutamate; N-formimidoyl-L-glutamate from L-histidine: step 3/3. Catalyzes the hydrolytic cleavage of the carbon-nitrogen bond in imidazolone-5-propanoate to yield N-formimidoyl-L-glutamate. It is the third step in the universal histidine degradation pathway. The polypeptide is Imidazolonepropionase (Christiangramia forsetii (strain DSM 17595 / CGMCC 1.15422 / KT0803) (Gramella forsetii)).